Reading from the N-terminus, the 318-residue chain is Probable cell division protein WhiA (318 aa).

The H-T-H motif DNA-binding region spans 281-314 (SLKELGEMLSPPVGKSGVNHRLRRIEKIAEELSK).

It belongs to the WhiA family.

Functionally, involved in cell division and chromosome segregation. The protein is Probable cell division protein WhiA of Clostridium tetani (strain Massachusetts / E88).